The following is a 130-amino-acid chain: Small ribosomal subunit protein uS11c (130 aa).

Belongs to the universal ribosomal protein uS11 family. In terms of assembly, part of the 30S ribosomal subunit.

It is found in the plastid. The protein resides in the chloroplast. The polypeptide is Small ribosomal subunit protein uS11c (Chara vulgaris (Common stonewort)).